The sequence spans 219 residues: Redox-sensing transcriptional repressor Rex (219 aa).

A DNA-binding region (H-T-H motif) is located at residues Leu-18–Phe-57. Gly-92 to Gly-97 serves as a coordination point for NAD(+).

It belongs to the transcriptional regulatory Rex family. Homodimer.

The protein localises to the cytoplasm. Functionally, modulates transcription in response to changes in cellular NADH/NAD(+) redox state. This is Redox-sensing transcriptional repressor Rex from Exiguobacterium sibiricum (strain DSM 17290 / CCUG 55495 / CIP 109462 / JCM 13490 / 255-15).